The primary structure comprises 86 residues: Putative regulatory protein BBR47_37350 (86 aa).

This sequence belongs to the RemA family.

The chain is Putative regulatory protein BBR47_37350 from Brevibacillus brevis (strain 47 / JCM 6285 / NBRC 100599).